Consider the following 130-residue polypeptide: Small ribosomal subunit protein uS8 (130 aa).

The protein belongs to the universal ribosomal protein uS8 family. In terms of assembly, part of the 30S ribosomal subunit. Contacts proteins S5 and S12.

Its function is as follows. One of the primary rRNA binding proteins, it binds directly to 16S rRNA central domain where it helps coordinate assembly of the platform of the 30S subunit. This chain is Small ribosomal subunit protein uS8, found in Buchnera aphidicola subsp. Baizongia pistaciae (strain Bp).